A 1104-amino-acid polypeptide reads, in one-letter code: Lon protease homolog, mitochondrial (1104 aa).

Residues 1–58 (MLPLRAFARLAQRPRLSRPTQLARSSLPRPSPSRPAAHYLALAPAPSTRFLHSSPPVL) constitute a mitochondrion transit peptide. Positions 8–144 (ARLAQRPRLS…PGAGGPKEVA (137 aa)) are disordered. Low complexity predominate over residues 22–46 (LARSSLPRPSPSRPAAHYLALAPAP). Basic and acidic residues predominate over residues 80 to 103 (KQDDQVEKPLPDAESSKSAEERAK). Residues 104 to 128 (SQSSKPDIKASSSDSVSSSAPAPGS) show a composition bias toward low complexity. A compositionally biased stretch (gly residues) spans 129 to 139 (ADGGSPPGAGG). The region spanning 155-444 (VLAIPITHRP…RALVLLKKEL (290 aa)) is the Lon N-terminal domain. Position 597 to 604 (597 to 604 (GPPGVGKT)) interacts with ATP. One can recognise a Lon proteolytic domain in the interval 895–1082 (SPPAGVSTGL…RQVLHEAFRG (188 aa)). Catalysis depends on residues Ser-987 and Lys-1030.

It belongs to the peptidase S16 family. As to quaternary structure, homohexamer or homoheptamer. Organized in a ring with a central cavity.

It is found in the mitochondrion matrix. The enzyme catalyses Hydrolysis of proteins in presence of ATP.. Functionally, ATP-dependent serine protease that mediates the selective degradation of misfolded, unassembled or oxidatively damaged polypeptides as well as certain short-lived regulatory proteins in the mitochondrial matrix. May also have a chaperone function in the assembly of inner membrane protein complexes. Participates in the regulation of mitochondrial gene expression and in the maintenance of the integrity of the mitochondrial genome. Binds to mitochondrial DNA in a site-specific manner. This is Lon protease homolog, mitochondrial from Cryptococcus neoformans var. neoformans serotype D (strain B-3501A) (Filobasidiella neoformans).